We begin with the raw amino-acid sequence, 299 residues long: Probable tyrosine phosphatase protein J4 (299 aa).

A Tyrosine-protein phosphatase domain is found at Val16–Trp289. Cys230 serves as the catalytic Phosphocysteine intermediate.

This sequence belongs to the protein-tyrosine phosphatase family.

The enzyme catalyses O-phospho-L-tyrosyl-[protein] + H2O = L-tyrosyl-[protein] + phosphate. The chain is Probable tyrosine phosphatase protein J4 (J5) from Microplitis demolitor bracovirus (isolate Webb) (MdBV).